The sequence spans 189 residues: GTPase NRas (189 aa).

GTP-binding positions include 10–18 (GAGGVGKSA) and 29–30 (VD). An Effector region motif is present at residues 32-40 (YDPTIEDSY). 57–61 (DTAGQ) lines the GTP pocket. Residue Ser89 is modified to Phosphoserine. 116–119 (NKCD) serves as a coordination point for GTP. A hypervariable region region spans residues 166–185 (YRMKKLNSSDDGTQGCLGLS). Lys170 participates in a covalent cross-link: Glycyl lysine isopeptide (Lys-Gly) (interchain with G-Cter in ubiquitin). Cys181 is lipidated: S-palmitoyl cysteine. Cys186 is lipidated: S-farnesyl cysteine. Residues 187–189 (AVM) constitute a propeptide, removed in mature form.

This sequence belongs to the small GTPase superfamily. Ras family. As to quaternary structure, interacts (active GTP-bound form preferentially) with RGS14. Interacts (active GTP-bound form) with RASSF7. Interacts (active GTP-bound form) with both SHOC2 and PP1c (all isoforms) to form a tertiary complex; SHOC2 and PP1c preferably bind M-Ras/MRAS, but they also bind K-Ras/KRAS, N-Ras/NRAS and H-Ras/HRAS. In terms of processing, palmitoylated by the ZDHHC9-GOLGA7 complex. Depalmitoylated by ABHD17A, ABHD17B and ABHD17C. A continuous cycle of de- and re-palmitoylation regulates rapid exchange between plasma membrane and Golgi. Acetylation at Lys-104 prevents interaction with guanine nucleotide exchange factors (GEFs). Post-translationally, ubiquitinated by the BCR(LZTR1) E3 ubiquitin ligase complex at Lys-170 in a non-degradative manner, leading to inhibit Ras signaling by decreasing Ras association with membranes. In terms of processing, phosphorylation at Ser-89 enhances NRAS association with its downstream effectors.

Its subcellular location is the cell membrane. It localises to the golgi apparatus membrane. It carries out the reaction GTP + H2O = GDP + phosphate + H(+). Alternates between an inactive form bound to GDP and an active form bound to GTP. Activated by a guanine nucleotide-exchange factor (GEF) and inactivated by a GTPase-activating protein (GAP). Its function is as follows. Ras proteins bind GDP/GTP and possess intrinsic GTPase activity. The polypeptide is GTPase NRas (NRAS) (Monodelphis domestica (Gray short-tailed opossum)).